The following is a 659-amino-acid chain: Heparin-sulfate lyase (659 aa).

Positions methionine 1–alanine 24 are cleaved as a signal peptide. The active-site Proton acceptor is the tyrosine 294.

The protein belongs to the polysaccharide lyase 12 family.

The protein localises to the periplasm. It catalyses the reaction Elimination of sulfate, appears to act on linkages between N-acetyl-D-glucosamine and uronate. Product is an unsaturated sugar.. Its function is as follows. Specifically cleaves heparan sulfate-rich regions of acidic polysaccharides. Does not act on N,O-desulfated glucosamine or N-acetyl-O-sulfated glucosamine linkages. Functions in cleaving metazoan heparan sulfate and providing carbon, nitrogen and sulfate sources for microorganisms. The sequence is that of Heparin-sulfate lyase (hepC) from Pedobacter heparinus (strain ATCC 13125 / DSM 2366 / CIP 104194 / JCM 7457 / NBRC 12017 / NCIMB 9290 / NRRL B-14731 / HIM 762-3).